Here is a 477-residue protein sequence, read N- to C-terminus: Ankyrin repeat, SAM and basic leucine zipper domain-containing protein 1 (477 aa).

The segment at 1 to 24 (MAASSLWGPAVAGGGESSESEDDG) is disordered. Phosphoserine is present on residues Ser-17, Ser-18, and Ser-20. 6 ANK repeats span residues 45-74 (EKNE…SVDS), 78-107 (YGWT…NASF), 110-144 (DKQT…DPNV), 148-177 (RQMT…EVNA), 181-210 (NGYT…NKML), and 214-243 (DGKT…PLEG). Positions 272-334 (SYTAFGELDL…KILSALKELM (63 aa)) constitute an SAM domain.

As to quaternary structure, interacts with DDX4, PIWIL1, RANBP9 and TDRD1.

The protein resides in the cytoplasm. In terms of biological role, plays a central role during spermatogenesis by repressing transposable elements and preventing their mobilization, which is essential for the germline integrity. Acts via the piRNA metabolic process, which mediates the repression of transposable elements during meiosis by forming complexes composed of piRNAs and Piwi proteins and governs the methylation and subsequent repression of transposons. Its association with pi-bodies suggests a participation in the primary piRNAs metabolic process. Required prior to the pachytene stage to facilitate the production of multiple types of piRNAs, including those associated with repeats involved in the regulation of retrotransposons. May act by mediating protein-protein interactions during germ cell maturation. The sequence is that of Ankyrin repeat, SAM and basic leucine zipper domain-containing protein 1 (ASZ1) from Echinops telfairi (Lesser hedgehog tenrec).